A 481-amino-acid polypeptide reads, in one-letter code: Thyroid receptor-interacting protein 6 (481 aa).

A compositionally biased stretch (pro residues) spans 1-12 (MSGPTWLPPKQP). The interval 1 to 259 (MSGPTWLPPK…QVPLSQPPEE (259 aa)) is disordered. Arg25 bears the Asymmetric dimethylarginine; alternate mark. Arg25 carries the post-translational modification Omega-N-methylarginine; alternate. At Tyr55 the chain carries Phosphotyrosine; by SRC. Residue Ser92 is modified to Phosphoserine. Over residues 108 to 122 (DGGRGHAPRRPDRQA) the composition is skewed to basic and acidic residues. Arg111 is subject to Omega-N-methylarginine. 2 stretches are compositionally biased toward low complexity: residues 153-173 (SPYGAPTPASYATASTPAGPA) and 183-193 (PVRGCGPPRRG). 2 positions are modified to omega-N-methylarginine: Arg185 and Arg192. Ser195 is modified (phosphoserine). An Omega-N-methylarginine modification is found at Arg211. Over residues 221 to 233 (SHREPGPGVKEEA) the composition is skewed to basic and acidic residues. Position 243 is an omega-N-methylarginine (Arg243). A Phosphoserine modification is found at Ser254. 3 LIM zinc-binding domains span residues 284-321 (CGGCGEDVVGDGAGVVALDRVFHVGCFVCSTCRAQLRG), 344-403 (CSTC…FAPR), and 404-472 (CSVC…RIQE). The interaction with MAGI1 and PTPN13 stretch occupies residues 474-481 (SATVTTDC).

Belongs to the zyxin/ajuba family. As to quaternary structure, specifically interacts with the ligand binding domain of the thyroid receptor (TR) in the presence of thyroid hormone. Interacts (via the third LIM domain and C-terminus) with PTPN13 (via the second PDZ domain). Interacts (via the second LIM domain or via the third LIM domain plus C-terminus) with PDLIM4 (via PDZ domain). Found in a complex with PTPN13 and PDLIM4. Interacts with SVIL isoform 2. Interacts with LPAR2 but not other LPA receptors. Interacts with PRKAA2. Interacts with MAGI1. Interacts with SCRIB. Post-translationally, phosphorylation at Tyr-55 by SRC is required for enhancement of lysophosphatidic acid-induced cell migration. Tyr-55 is dephosphorylated by PTPN13.

It localises to the cytoplasm. The protein resides in the cytoskeleton. It is found in the cell junction. Its subcellular location is the focal adhesion. The protein localises to the nucleus. Functionally, relays signals from the cell surface to the nucleus to weaken adherens junction and promote actin cytoskeleton reorganization and cell invasiveness. Involved in lysophosphatidic acid-induced cell adhesion and migration. Acts as a transcriptional coactivator for NF-kappa-B and JUN, and mediates the transrepression of these transcription factors induced by glucocorticoid receptor. The protein is Thyroid receptor-interacting protein 6 (TRIP6) of Bos taurus (Bovine).